An 84-amino-acid polypeptide reads, in one-letter code: Fulditoxin (84 aa).

Positions 1–21 (MKTLLLTLVVVTIVCLDLGNS) are cleaved as a signal peptide. 4 cysteine pairs are disulfide-bonded: cysteine 24-cysteine 41, cysteine 34-cysteine 59, cysteine 63-cysteine 71, and cysteine 72-cysteine 77. Histidine 50 is a binding site for Zn(2+).

This sequence belongs to the three-finger toxin family. Short-chain subfamily. Homodimer; non-covalently linked. Is able to form a tetramer of dimers in the presence of 2 zinc ions. In terms of tissue distribution, expressed by the venom gland.

It localises to the secreted. In terms of biological role, postsynaptic neurotoxin that produces potent, and completely reversible, postsynaptic neuromuscular blockade, as well as broad spectrum inhibition of human muscle and neuronal nicotinic acetylcholine receptors (nAChRs). Inhibition is potent or moderate, depending on the receptor (alpha-1-beta-1-delta-epsilon/CHRNA1-CHRNB1-CHRND-CHRNE (IC(50)=2.56 uM), alpha-4-beta-2/CHRNA4-CHRNB2 (IC(50)=1.8 uM), alpha-7/CHRNA7 (IC(50)=7 uM), and alpha-3-beta-2/CHRNA3-CHRNB2 (IC(50)=12.6 uM)). Acts as a competitive antagonist of ACh. Binds to chicken muscle-type nicotinic acetylcholine receptor (AChR) with high potency compared with the cloned human receptor. Unlike short-chain alpha-3FTxs that only bind to muscle nAChRs, this toxin utilizes dimerization to expand its pharmacological targets to block neuronal nAChRs. In Micrurus fulvius (Eastern coral snake), this protein is Fulditoxin.